The chain runs to 372 residues: Neutral protease 2 homolog MGYG_06241 (372 aa).

The N-terminal stretch at 1–19 (MQFFTAIAAISALVAPALA) is a signal peptide. A propeptide spanning residues 20–188 (LPTQELPQAP…THFAGTLNRR (169 aa)) is cleaved from the precursor. 2 cysteine pairs are disulfide-bonded: Cys195/Cys264 and Cys271/Cys289. Residue His313 participates in Zn(2+) binding. Glu314 is an active-site residue. Zn(2+)-binding residues include His317 and Asp328.

This sequence belongs to the peptidase M35 family. The cofactor is Zn(2+).

Its subcellular location is the secreted. It catalyses the reaction Preferential cleavage of bonds with hydrophobic residues in P1'. Also 3-Asn-|-Gln-4 and 8-Gly-|-Ser-9 bonds in insulin B chain.. In terms of biological role, secreted metalloproteinase that allows assimilation of proteinaceous substrates. Shows high activities on basic nuclear substrates such as histone and protamine. May be involved in virulence. The chain is Neutral protease 2 homolog MGYG_06241 from Arthroderma gypseum (strain ATCC MYA-4604 / CBS 118893) (Microsporum gypseum).